Here is a 159-residue protein sequence, read N- to C-terminus: Ankyrin repeat domain-containing protein 37 (159 aa).

ANK repeat units follow at residues 1-25 (MLLL…SVNA), 30-59 (QEQS…DLNQ), and 63-92 (LGET…QIGV). The Nuclear localization signal motif lies at 130-150 (EQQERDPRAPVLRQKRSFRTV).

In terms of processing, ubiquitinated by the CRL2(FEM1B) complex, leading to its degradation. As to expression, expressed testis, ovary, uterus, kidney, liver, but not in other tissues.

The protein localises to the nucleus. The protein resides in the cytoplasm. The sequence is that of Ankyrin repeat domain-containing protein 37 from Mus musculus (Mouse).